We begin with the raw amino-acid sequence, 181 residues long: Acireductone dioxygenase (181 aa).

Fe(2+)-binding residues include His97, His99, Glu103, and His141. Ni(2+) is bound by residues His97, His99, Glu103, and His141.

The protein belongs to the acireductone dioxygenase (ARD) family. As to quaternary structure, monomer. The cofactor is Fe(2+). Ni(2+) is required as a cofactor.

The catalysed reaction is 1,2-dihydroxy-5-(methylsulfanyl)pent-1-en-3-one + O2 = 3-(methylsulfanyl)propanoate + CO + formate + 2 H(+). It carries out the reaction 1,2-dihydroxy-5-(methylsulfanyl)pent-1-en-3-one + O2 = 4-methylsulfanyl-2-oxobutanoate + formate + 2 H(+). It participates in amino-acid biosynthesis; L-methionine biosynthesis via salvage pathway; L-methionine from S-methyl-5-thio-alpha-D-ribose 1-phosphate: step 5/6. In terms of biological role, catalyzes 2 different reactions between oxygen and the acireductone 1,2-dihydroxy-3-keto-5-methylthiopentene (DHK-MTPene) depending upon the metal bound in the active site. Fe-containing acireductone dioxygenase (Fe-ARD) produces formate and 2-keto-4-methylthiobutyrate (KMTB), the alpha-ketoacid precursor of methionine in the methionine recycle pathway. Ni-containing acireductone dioxygenase (Ni-ARD) produces methylthiopropionate, carbon monoxide and formate, and does not lie on the methionine recycle pathway. The protein is Acireductone dioxygenase of Pseudomonas savastanoi pv. phaseolicola (strain 1448A / Race 6) (Pseudomonas syringae pv. phaseolicola (strain 1448A / Race 6)).